Reading from the N-terminus, the 150-residue chain is UPF0102 protein sll0189 (150 aa).

The protein belongs to the UPF0102 family.

The chain is UPF0102 protein sll0189 from Synechocystis sp. (strain ATCC 27184 / PCC 6803 / Kazusa).